A 147-amino-acid polypeptide reads, in one-letter code: Hemoglobin subunit beta (147 aa).

V2 is modified (N-acetylvaline). A Globin domain is found at H3–H147. The residue at position 13 (T13) is a Phosphothreonine. A Phosphoserine modification is found at S45. K60 bears the N6-acetyllysine mark. Position 64 (H64) interacts with heme b. K83 carries the N6-acetyllysine modification. Position 93 (H93) interacts with heme b. Position 94 is an S-nitrosocysteine (C94). K145 is modified (N6-acetyllysine).

Belongs to the globin family. In terms of assembly, heterotetramer of two alpha chains and two beta chains. Red blood cells.

Involved in oxygen transport from the lung to the various peripheral tissues. The chain is Hemoglobin subunit beta (HBB) from Tachyglossus aculeatus aculeatus (Southeast Australian short-beaked echidna).